Here is a 217-residue protein sequence, read N- to C-terminus: Large ribosomal subunit protein uL3 (217 aa).

The segment at 127–162 is disordered; the sequence is GFSRGPMSHGSKNHRAPGSTGAGTTPGRIYPGKRMA. Positions 142 to 153 are enriched in low complexity; the sequence is APGSTGAGTTPG.

The protein belongs to the universal ribosomal protein uL3 family. Part of the 50S ribosomal subunit. Forms a cluster with proteins L14 and L19.

In terms of biological role, one of the primary rRNA binding proteins, it binds directly near the 3'-end of the 23S rRNA, where it nucleates assembly of the 50S subunit. The polypeptide is Large ribosomal subunit protein uL3 (Prochlorococcus marinus (strain MIT 9312)).